Consider the following 417-residue polypeptide: Phosphoglycerate kinase (417 aa).

14 residues coordinate (2R)-3-phosphoglycerate: Val-23, Asp-24, Phe-25, Asn-26, Gln-38, Arg-39, Ser-62, His-63, Gly-65, Arg-66, Leu-121, Arg-122, His-169, and Arg-170. Gly-213 lines the ADP pocket. Gly-213 contacts CDP. Positions 214 and 215 each coordinate AMP. Residue Ala-214 participates in ATP binding. Residue Ala-214 participates in Mg(2+) binding. Asp-218 provides a ligand contact to CDP. Asp-218 is a binding site for Mg(2+). Lys-219 contacts AMP. An ATP-binding site is contributed by Lys-219. Gly-237 is an ADP binding site. Gly-237 lines the CDP pocket. Positions 238 and 312 each coordinate AMP. The ATP site is built by Gly-238 and Gly-312. Gly-337 and Phe-342 together coordinate CDP. Phe-342 serves as a coordination point for ADP. Residue Glu-343 participates in AMP binding. The ATP site is built by Glu-343, Asp-374, and Thr-375. Asp-374 is a Mg(2+) binding site.

The protein belongs to the phosphoglycerate kinase family. As to quaternary structure, monomer. Mg(2+) serves as cofactor.

Its subcellular location is the cytoplasm. It is found in the secreted. The protein resides in the cell wall. It localises to the mitochondrion. The catalysed reaction is (2R)-3-phosphoglycerate + ATP = (2R)-3-phospho-glyceroyl phosphate + ADP. It functions in the pathway carbohydrate degradation; glycolysis; pyruvate from D-glyceraldehyde 3-phosphate: step 2/5. Catalyzes one of the two ATP producing reactions in the glycolytic pathway via the reversible conversion of 1,3-diphosphoglycerate to 3-phosphoglycerate. Both L- and D- forms of purine and pyrimidine nucleotides can be used as substrates, but the activity is much lower on pyrimidines. Negatively regulates the biosynthesis of acetyl-CoA from pyruvate in the mitochondrion. This chain is Phosphoglycerate kinase (PGK1), found in Candida albicans (strain SC5314 / ATCC MYA-2876) (Yeast).